The following is a 211-amino-acid chain: Large ribosomal subunit protein bL25 (211 aa).

The segment covering 1-18 has biased composition (basic and acidic residues); the sequence is MAKTHEIKAERRADEGKG. Positions 1-20 are disordered; that stretch reads MAKTHEIKAERRADEGKGAS.

It belongs to the bacterial ribosomal protein bL25 family. CTC subfamily. As to quaternary structure, part of the 50S ribosomal subunit; part of the 5S rRNA/L5/L18/L25 subcomplex. Contacts the 5S rRNA. Binds to the 5S rRNA independently of L5 and L18.

This is one of the proteins that binds to the 5S RNA in the ribosome where it forms part of the central protuberance. This Xanthomonas oryzae pv. oryzae (strain MAFF 311018) protein is Large ribosomal subunit protein bL25.